Consider the following 219-residue polypeptide: Small ribosomal subunit protein uS3 (219 aa).

The KH type-2 domain maps to 38 to 107 (IREYIENKMK…RVHINVVEVK (70 aa)).

It belongs to the universal ribosomal protein uS3 family. In terms of assembly, part of the 30S ribosomal subunit. Forms a tight complex with proteins S10 and S14.

Binds the lower part of the 30S subunit head. Binds mRNA in the 70S ribosome, positioning it for translation. The chain is Small ribosomal subunit protein uS3 from Exiguobacterium sp. (strain ATCC BAA-1283 / AT1b).